A 355-amino-acid chain; its full sequence is 3'-5' exonuclease (355 aa).

The segment at 1 to 121 (MDKYLIKLPN…PSPEKEKPEK (121 aa)) is disordered. Composition is skewed to basic and acidic residues over residues 17 to 29 (VSDK…KETP), 36 to 50 (AKKD…KENT), and 72 to 92 (KNLD…ENPP). Phosphoserine occurs at positions 105 and 113. Residues 147-315 (VMQWVEKQKE…GQVIYRDLEQ (169 aa)) form the 3'-5' exonuclease domain. The Mg(2+) site is built by D164, E166, and D302.

This sequence belongs to the WRNexo family.

Its subcellular location is the nucleus. Has exonuclease activity on both single-stranded and duplex templates bearing overhangs, but not blunt ended duplex DNA, and cleaves in a 3'-5' direction. Essential for the formation of DNA replication focal centers. Has an important role in maintaining genome stability. In Drosophila ananassae (Fruit fly), this protein is 3'-5' exonuclease.